A 274-amino-acid chain; its full sequence is MGNTIRAFVAFIPTDRCQSYVVGDLREMPLDRMVDLSGSQLRRFPLHVCSFTELVKLYLSDNHLHSLPPDLAQLQNLQILALDFNNFKALPRVVCTLKQLCILYLGNNKLCDLPDELSLLQNLRTLWLESNCLTRLPDVVCELSLLKTLHAGSNALRLLPGQLRRLRELRTIWLSGNQLADFPSVLLRMPFLEVIDVDRNSIRYFPSLAHLTNLKLVIYDHNPCRNAPKVGKGVRRVGRWAEETPEPDPRKARRYALAKEENQEPPPPLLPSSS.

8 LRR repeats span residues 30–51 (LDRM…VCSF), 52–74 (TELV…LAQL), 76–97 (NLQI…VCTL), 98–120 (KQLC…LSLL), 121–143 (QNLR…VCEL), 145–166 (LLKT…LRRL), 167–189 (RELR…LLRM), and 191–213 (FLEV…HLTN). The interval 236–274 (RVGRWAEETPEPDPRKARRYALAKEENQEPPPPLLPSSS) is disordered. Residues 239–250 (RWAEETPEPDPR) show a composition bias toward basic and acidic residues. Residues 264–274 (EPPPPLLPSSS) show a composition bias toward pro residues.

In terms of tissue distribution, detected specifically in the heart.

Its subcellular location is the nucleus. May play important roles in cardiac development and/or cardiac function. The polypeptide is Leucine-rich repeat-containing protein 10 (Lrrc10) (Mus musculus (Mouse)).